The following is a 172-amino-acid chain: Protein GrpE (172 aa).

The segment at methionine 1 to leucine 23 is disordered.

The protein belongs to the GrpE family. In terms of assembly, homodimer.

The protein resides in the cytoplasm. Its function is as follows. Participates actively in the response to hyperosmotic and heat shock by preventing the aggregation of stress-denatured proteins, in association with DnaK and GrpE. It is the nucleotide exchange factor for DnaK and may function as a thermosensor. Unfolded proteins bind initially to DnaJ; upon interaction with the DnaJ-bound protein, DnaK hydrolyzes its bound ATP, resulting in the formation of a stable complex. GrpE releases ADP from DnaK; ATP binding to DnaK triggers the release of the substrate protein, thus completing the reaction cycle. Several rounds of ATP-dependent interactions between DnaJ, DnaK and GrpE are required for fully efficient folding. In Xylella fastidiosa (strain M23), this protein is Protein GrpE.